The primary structure comprises 490 residues: Solute carrier family 2, facilitated glucose transporter member 1 (490 aa).

At 1 to 10 the chain is on the cytoplasmic side; the sequence is MESGSKMTAR. The helical transmembrane segment at 11 to 32 threads the bilayer; that stretch reads LMLAVGGAVLGSLQFGYNTGVI. The Extracellular segment spans residues 33-65; it reads NRPQKVIEDFYNHTWLYRYEEPISPATLTTLWS. An N-linked (GlcNAc...) asparagine glycan is attached at Asn-44. A helical transmembrane segment spans residues 66–86; it reads LSVAIFSVGGMIGSFSVGLFV. The Cytoplasmic segment spans residues 87–89; sequence NRF. A helical membrane pass occupies residues 90-111; it reads GRRNSMLMSNILAFLAAVLMGF. Over 112–119 the chain is Extracellular; the sequence is SKMALSFE. The chain crosses the membrane as a helical span at residues 120–143; it reads MLILGRFIIGLYSGLTTGFVPMYV. At 144 to 154 the chain is on the cytoplasmic side; it reads GEVSPTALRGA. Residues 155–175 traverse the membrane as a helical segment; it reads LGTFHQLGIVLGILIAQVFGL. Gln-160 lines the D-glucose pocket. Residues 176–184 lie on the Extracellular side of the membrane; sequence DLIMGNDSL. The chain crosses the membrane as a helical span at residues 185–205; it reads WPLLLGFIFVPALLQCIILPF. Topologically, residues 206–270 are cytoplasmic; sequence APESPRFLLI…LFRSPMYRQP (65 aa). A helical membrane pass occupies residues 271 to 292; the sequence is ILIAIVLQLSQQLSGINAVFYY. D-glucose is bound by residues 281 to 282 and Asn-287; that span reads QQ. The Extracellular segment spans residues 293–305; sequence STSIFEKSGVEQP. A helical transmembrane segment spans residues 306-327; it reads VYATIGSGVVNTAFTVVSLFVV. Asn-316 provides a ligand contact to D-glucose. The Cytoplasmic segment spans residues 328–333; that stretch reads ERAGRR. Residues 334 to 354 traverse the membrane as a helical segment; the sequence is TLHLIGLAGMAGCAILMTIAL. Over 355–364 the chain is Extracellular; the sequence is TLLDQMPWMS. The helical transmembrane segment at 365–387 threads the bilayer; the sequence is YLSIVAIFGFVAFFEIGPGPIPW. Positions 379 and 387 each coordinate D-glucose. Residues 388 to 400 lie on the Cytoplasmic side of the membrane; that stretch reads FIVAELFSQGPRP. A helical membrane pass occupies residues 401–421; that stretch reads AAFAVAGLSNWTSNFIVGMGF. Residues 422-428 are Extracellular-facing; the sequence is QYIAQLC. A helical transmembrane segment spans residues 429–449; that stretch reads GSYVFIIFTVLLVLFFIFTYF. At 450–490 the chain is on the cytoplasmic side; that stretch reads KVPETKGRTFDEIAYRFRQGGASQSDKTPDEFHSLGADSQV. Residues 470–490 form a disordered region; it reads GASQSDKTPDEFHSLGADSQV.

This sequence belongs to the major facilitator superfamily. Sugar transporter (TC 2.A.1.1) family. Glucose transporter subfamily. In terms of assembly, interacts with isoform 1 of BSG. Retinal cones (at protein level).

The protein localises to the cell membrane. The protein resides in the photoreceptor inner segment. The enzyme catalyses D-glucose(out) = D-glucose(in). In terms of biological role, facilitative glucose transporter, which is responsible for constitutive or basal glucose uptake. Has a very broad substrate specificity; can transport a wide range of aldoses including both pentoses and hexoses. Most important energy carrier of the brain: present at the blood-brain barrier and assures the energy-independent, facilitative transport of glucose into the brain. In association with BSG and NXNL1, promotes retinal cone survival by increasing glucose uptake into photoreceptors. Required for mesendoderm differentiation. This Gallus gallus (Chicken) protein is Solute carrier family 2, facilitated glucose transporter member 1.